Here is a 277-residue protein sequence, read N- to C-terminus: Diaminopimelate epimerase (277 aa).

The substrate site is built by Asn13, Gln46, and Asn66. The active-site Proton donor is Cys75. Residues 76-77 (GN), Asn160, Asn193, and 211-212 (ER) each bind substrate. Cys220 acts as the Proton acceptor in catalysis. 221 to 222 (GS) serves as a coordination point for substrate.

It belongs to the diaminopimelate epimerase family. As to quaternary structure, homodimer.

The protein localises to the cytoplasm. It carries out the reaction (2S,6S)-2,6-diaminopimelate = meso-2,6-diaminopimelate. The protein operates within amino-acid biosynthesis; L-lysine biosynthesis via DAP pathway; DL-2,6-diaminopimelate from LL-2,6-diaminopimelate: step 1/1. Its function is as follows. Catalyzes the stereoinversion of LL-2,6-diaminopimelate (L,L-DAP) to meso-diaminopimelate (meso-DAP), a precursor of L-lysine and an essential component of the bacterial peptidoglycan. This chain is Diaminopimelate epimerase, found in Legionella pneumophila (strain Lens).